The following is an 87-amino-acid chain: DNA-directed RNA polymerase subunit omega (87 aa).

The protein belongs to the RNA polymerase subunit omega family. The RNAP catalytic core consists of 2 alpha, 1 beta, 1 beta' and 1 omega subunit. When a sigma factor is associated with the core the holoenzyme is formed, which can initiate transcription.

The enzyme catalyses RNA(n) + a ribonucleoside 5'-triphosphate = RNA(n+1) + diphosphate. In terms of biological role, promotes RNA polymerase assembly. Latches the N- and C-terminal regions of the beta' subunit thereby facilitating its interaction with the beta and alpha subunits. The polypeptide is DNA-directed RNA polymerase subunit omega (Thioalkalivibrio sulfidiphilus (strain HL-EbGR7)).